Consider the following 74-residue polypeptide: Large ribosomal subunit protein uL29 (74 aa).

It belongs to the universal ribosomal protein uL29 family.

In Cyanothece sp. (strain PCC 7425 / ATCC 29141), this protein is Large ribosomal subunit protein uL29.